Reading from the N-terminus, the 73-residue chain is Translation initiation factor IF-1 (73 aa).

An S1-like domain is found at 1 to 73 (MAKKDGAIEV…TRGRIVYRYK (73 aa)).

Belongs to the IF-1 family. As to quaternary structure, component of the 30S ribosomal translation pre-initiation complex which assembles on the 30S ribosome in the order IF-2 and IF-3, IF-1 and N-formylmethionyl-tRNA(fMet); mRNA recruitment can occur at any time during PIC assembly.

It localises to the cytoplasm. Functionally, one of the essential components for the initiation of protein synthesis. Stabilizes the binding of IF-2 and IF-3 on the 30S subunit to which N-formylmethionyl-tRNA(fMet) subsequently binds. Helps modulate mRNA selection, yielding the 30S pre-initiation complex (PIC). Upon addition of the 50S ribosomal subunit IF-1, IF-2 and IF-3 are released leaving the mature 70S translation initiation complex. The chain is Translation initiation factor IF-1 from Mycolicibacterium gilvum (strain PYR-GCK) (Mycobacterium gilvum (strain PYR-GCK)).